We begin with the raw amino-acid sequence, 308 residues long: Aspartate carbamoyltransferase catalytic subunit (308 aa).

Arg-49 and Thr-50 together coordinate carbamoyl phosphate. Lys-77 is an L-aspartate binding site. Carbamoyl phosphate contacts are provided by Arg-99, His-127, and Gln-130. Positions 160 and 211 each coordinate L-aspartate. Carbamoyl phosphate contacts are provided by Ala-252 and Pro-253.

It belongs to the aspartate/ornithine carbamoyltransferase superfamily. ATCase family. Heterododecamer (2C3:3R2) of six catalytic PyrB chains organized as two trimers (C3), and six regulatory PyrI chains organized as three dimers (R2).

It carries out the reaction carbamoyl phosphate + L-aspartate = N-carbamoyl-L-aspartate + phosphate + H(+). Its pathway is pyrimidine metabolism; UMP biosynthesis via de novo pathway; (S)-dihydroorotate from bicarbonate: step 2/3. Functionally, catalyzes the condensation of carbamoyl phosphate and aspartate to form carbamoyl aspartate and inorganic phosphate, the committed step in the de novo pyrimidine nucleotide biosynthesis pathway. The polypeptide is Aspartate carbamoyltransferase catalytic subunit (Geobacillus kaustophilus (strain HTA426)).